Here is a 530-residue protein sequence, read N- to C-terminus: MEDDSLYLGGDWQFNHFSKLTSSRLDAAFAEIQRTSLSEKSPLSSETRFDLCDDLAPVARQLAPREKLPLSSRRPAAVGAGLQKIGNTFYVNVSLQCLTYTLPLSNYMLSREDSQTCHLHKCCMFCTMQAHITWALHSPGHVIQPSQVLAAGFHRGEQEDAHEFLMFTVDAMKKACLPGHKQLDHHSKDTTLIHQIFGAYWRSQIKYLHCHGVSDTFDPYLDIALDIQAAQSVKQALEQLVKPKELNGENAYHCGLCLQKAPASKTLTLPTSAKVLILVLKRFSDVTGNKLAKNVQYPKCRDMQPYMSQQNTGPLVYVLYAVLVHAGWSCHNGHYFSYVKAQEGQWYKMDDAEVTASGITSVLSQQAYVLFYIQKSEWERHSESVSRGREPRALGAEDTDRPATQGELKRDHPCLQVPELDEHLVERATQESTLDHWKFPQEQNKTKPEFNVRKVEGTLPPNVLVIHQSKYKCGMKNHHPEQQSSLLNLSSTKPTDQESMNTGTLASLQGSTRRSKGNNKHSKRSLLVCQ.

A USP domain is found at 80-375 (AGLQKIGNTF…QAYVLFYIQK (296 aa)). The span at 382 to 392 (SESVSRGREPR) shows a compositional bias: basic and acidic residues. Disordered stretches follow at residues 382–412 (SESV…KRDH), 431–454 (ESTL…NVRK), and 490–530 (SSTK…LVCQ). The span at 490–512 (SSTKPTDQESMNTGTLASLQGST) shows a compositional bias: polar residues. Residues 513–524 (RRSKGNNKHSKR) are compositionally biased toward basic residues.

This sequence belongs to the peptidase C19 family. USP17 subfamily.

The protein localises to the nucleus. Its subcellular location is the endoplasmic reticulum. This chain is Inactive ubiquitin carboxyl-terminal hydrolase 17-like protein 7 (USP17L7), found in Homo sapiens (Human).